Consider the following 65-residue polypeptide: SPbeta prophage-derived uncharacterized protein YorO (65 aa).

The sequence is that of SPbeta prophage-derived uncharacterized protein YorO (yorO) from Bacillus subtilis (strain 168).